A 97-amino-acid chain; its full sequence is Large ribosomal subunit protein eL37 (97 aa).

Lysine 10 bears the N6-acetyllysine mark. Zn(2+) contacts are provided by cysteine 19, cysteine 22, cysteine 34, and cysteine 37. A C4-type zinc finger spans residues 19-37; it reads CRRCGSKAYHLQKSTCGKC. 2 positions are modified to phosphoserine: serine 96 and serine 97.

Belongs to the eukaryotic ribosomal protein eL37 family. As to quaternary structure, component of the large ribosomal subunit.

It localises to the cytoplasm. Its function is as follows. Component of the large ribosomal subunit. The ribosome is a large ribonucleoprotein complex responsible for the synthesis of proteins in the cell. This Bos taurus (Bovine) protein is Large ribosomal subunit protein eL37 (RPL37).